Here is a 1115-residue protein sequence, read N- to C-terminus: MTGSHEMESIMLDSMEEEFPVSVETLGKLVDVPKGFDTYAELGGLSGLSTKLKSNIKTGLPLEKSSTEENRVLKYSKNILPDPPHQPLWSIVLDALSDHILILLIVAAVVSIVLGSIDYTSDHPETGWIDGVAILVAVILVVGITSLNDFKNQARFRELNDKSNDKEVKGIRGGEQCQISIFDVKVGDIISLDTGDIICADGVFIEGHALKCDESSITGESDPIKKGQPQDNMDPFLISGSMVIEGFGTMLVTAVGVNSFNGKTMMGLRVASEDTPLQMKLSVLASRIGYFGMGAAILMLLIAIPKYFIQRKVHDIEITREDAQPIVQLVISAITIVVVAVPEGLPLAVTMALAYGMMKMFKENNLVRNLASCETMGSATTICSDKTGTLTQNVMSVVTGTICGVFPTLDGIAQKIPKHVQSILTDGMAINSNAYEGVSSKGKLEFIGSKTECALLNFGKLFGCDYNEVRKRLEVVELYPFSSARKRMSVLVKHDQNLRLFTKGASEIILGQCGSYLDEAGNIRPISEAKAYFEEQINNFASDALRTIGLAYRDFQYGECDFKEPPENNLVFIGIVGIKDPLRPEVPEAVEICKRAGIVVRMVTGDNLVTAQNIARNCGILTEGGLCMEGPKFRELSQSEMDAILPKLQVLARSSPTDKQLLVGRLKDLGEVVAVTGDGTNDGPALKLANVGFSMGISGTEVAIAASDVVLLDDNFASIVRAVLWGRNIYDAICKFLQFQLTVNVVAVTVAFIGTLTSDVVEDKDNSSSSGSADKVTEEEPRQGSPLTAVQLLWVNLIMDTLAALALATEPPTPELLERPPNGKNAPLITRSMWKNIIGQAALQLAILFTILYQGHNIFQHFVPQAHGPIIKNGLHHYTLVFNCFVFLQLFNEINARVLGSRTNPFKNFFNNPIFIAVMIFTLGVQIIFVTFGGSATSTDSLYIVEWICCVVVGAISLPVGLLLRKIPIREPVVKNEIPVHSEAVYTSPSPNPSSSNLLGSGGAKPISKDYPTSGESTPPINDEGSPLVTRKTSVGASANDNINTPIPSSSSNLVNLNKPTQVGRGWQIVRQTHKKLVVINALKEFSQNKEPGLVDVVRGTNRGSLHLPVNQINN.

The Stromal segment spans residues 1 to 99; that stretch reads MTGSHEMESI…SIVLDALSDH (99 aa). Residues 100–120 traverse the membrane as a helical segment; that stretch reads ILILLIVAAVVSIVLGSIDYT. Residues 121 to 126 are Lumenal-facing; that stretch reads SDHPET. A helical transmembrane segment spans residues 127 to 147; it reads GWIDGVAILVAVILVVGITSL. Residues 148–235 lie on the Stromal side of the membrane; sequence NDFKNQARFR…KGQPQDNMDP (88 aa). The helical transmembrane segment at 236 to 256 threads the bilayer; sequence FLISGSMVIEGFGTMLVTAVG. Over 257–287 the chain is Lumenal; the sequence is VNSFNGKTMMGLRVASEDTPLQMKLSVLASR. A helical membrane pass occupies residues 288-308; it reads IGYFGMGAAILMLLIAIPKYF. Residues 309-328 are Stromal-facing; the sequence is IQRKVHDIEITREDAQPIVQ. The chain crosses the membrane as a helical span at residues 329 to 349; it reads LVISAITIVVVAVPEGLPLAV. The Lumenal portion of the chain corresponds to 350 to 735; that stretch reads TMALAYGMMK…GRNIYDAICK (386 aa). Asp-385 serves as the catalytic 4-aspartylphosphate intermediate. Positions 678 and 682 each coordinate Mg(2+). Residues 736-756 form a helical membrane-spanning segment; the sequence is FLQFQLTVNVVAVTVAFIGTL. The Stromal portion of the chain corresponds to 757-832; it reads TSDVVEDKDN…GKNAPLITRS (76 aa). The tract at residues 762–784 is disordered; sequence EDKDNSSSSGSADKVTEEEPRQG. The chain crosses the membrane as a helical span at residues 833-853; that stretch reads MWKNIIGQAALQLAILFTILY. Topologically, residues 854–873 are lumenal; sequence QGHNIFQHFVPQAHGPIIKN. The chain crosses the membrane as a helical span at residues 874 to 894; the sequence is GLHHYTLVFNCFVFLQLFNEI. Topologically, residues 895-913 are stromal; it reads NARVLGSRTNPFKNFFNNP. The helical transmembrane segment at 914–934 threads the bilayer; the sequence is IFIAVMIFTLGVQIIFVTFGG. Residues 935–943 are Lumenal-facing; the sequence is SATSTDSLY. The chain crosses the membrane as a helical span at residues 944–964; that stretch reads IVEWICCVVVGAISLPVGLLL. The Stromal segment spans residues 965-1115; that stretch reads RKIPIREPVV…LHLPVNQINN (151 aa). The segment at 984 to 1056 is disordered; that stretch reads AVYTSPSPNP…IPSSSSNLVN (73 aa). The segment covering 1040 to 1053 has biased composition (low complexity); it reads NDNINTPIPSSSSN.

This sequence belongs to the cation transport ATPase (P-type) (TC 3.A.3) family. Type IIB subfamily.

The protein localises to the contractile vacuole membrane. The protein resides in the cell membrane. It catalyses the reaction Ca(2+)(in) + ATP + H2O = Ca(2+)(out) + ADP + phosphate + H(+). Its function is as follows. Calcium ATPase involved in Ca(2+) homeostasis as a component of the contractile vacuole complex. This Dictyostelium discoideum (Social amoeba) protein is Calcium-transporting ATPase PAT1 (patA).